The sequence spans 971 residues: Putative helicase 184R (971 aa).

The interval Gly-506–Lys-528 is disordered. One can recognise an SF3 helicase domain in the interval Pro-624–Leu-807. Residue Gly-668–Ser-675 coordinates ATP.

The protein belongs to the IIV-6 184R family.

The polypeptide is Putative helicase 184R (Acheta domesticus (House cricket)).